The following is a 213-amino-acid chain: V-type proton ATPase subunit c'' (213 aa).

The Vacuolar segment spans residues 1 to 14 (MNKESKDDDMSLGK). The chain crosses the membrane as a helical span at residues 15–35 (FSFSHFLYYLVLIVVIVYGLY). At 36-61 (KLFTGHGSDINFGKFLLRTSPYMWAN) the chain is on the cytoplasmic side. A helical membrane pass occupies residues 62 to 82 (LGIALCVGLSVVGAAWGIFIT). At 83-100 (GSSMIGAGVRAPRITTKN) the chain is on the vacuolar side. A helical transmembrane segment spans residues 101-121 (LISIIFCEVVAIYGLIIAIVF). The Cytoplasmic portion of the chain corresponds to 122-144 (SSKLTVATAENMYSKSNLYTGYS). A helical membrane pass occupies residues 145-165 (LFWAGITVGASNLICGIAVGI). Over 166–183 (TGATAAISDAADSALFVK) the chain is Vacuolar. Residues 184-204 (ILVIEIFGSILGLLGLIVGLL) traverse the membrane as a helical segment. Over 205–213 (MAGKASEFQ) the chain is Cytoplasmic.

This sequence belongs to the V-ATPase proteolipid subunit family. In terms of assembly, V-ATPase is a heteromultimeric enzyme composed of a peripheral catalytic V1 complex (components A to H) attached to an integral membrane V0 proton pore complex (components: a, c, c', c'', d, e, f and VOA1). The decameric c-ring forms the proton-conducting pore, and is composed of eight proteolipid subunits c, one subunit c' and one subunit c''.

Its subcellular location is the vacuole membrane. Functionally, proton-conducting pore forming subunit of the V0 complex of vacuolar(H+)-ATPase (V-ATPase), a multisubunit enzyme composed of a peripheral complex (V1) that hydrolyzes ATP and a membrane integral complex (V0) that translocates protons. V-ATPase is responsible for acidifying and maintaining the pH of intracellular compartments. The polypeptide is V-type proton ATPase subunit c'' (VMA16) (Saccharomyces cerevisiae (strain ATCC 204508 / S288c) (Baker's yeast)).